Here is a 155-residue protein sequence, read N- to C-terminus: Protein PtsT (155 aa).

The chain is Protein PtsT (ptsT) from Geobacillus stearothermophilus (Bacillus stearothermophilus).